Reading from the N-terminus, the 449-residue chain is Phosphoglucosamine mutase (449 aa).

The active-site Phosphoserine intermediate is S100. Residues S100, D241, D243, and D245 each coordinate Mg(2+). Residue S100 is modified to Phosphoserine.

This sequence belongs to the phosphohexose mutase family. Mg(2+) serves as cofactor. Post-translationally, activated by phosphorylation.

The catalysed reaction is alpha-D-glucosamine 1-phosphate = D-glucosamine 6-phosphate. Its function is as follows. Catalyzes the conversion of glucosamine-6-phosphate to glucosamine-1-phosphate. This Caldicellulosiruptor saccharolyticus (strain ATCC 43494 / DSM 8903 / Tp8T 6331) protein is Phosphoglucosamine mutase.